Reading from the N-terminus, the 96-residue chain is Large ribosomal subunit protein uL23 (96 aa).

Belongs to the universal ribosomal protein uL23 family. As to quaternary structure, part of the 50S ribosomal subunit. Contacts protein L29, and trigger factor when it is bound to the ribosome.

In terms of biological role, one of the early assembly proteins it binds 23S rRNA. One of the proteins that surrounds the polypeptide exit tunnel on the outside of the ribosome. Forms the main docking site for trigger factor binding to the ribosome. The polypeptide is Large ribosomal subunit protein uL23 (Vesicomyosocius okutanii subsp. Calyptogena okutanii (strain HA)).